We begin with the raw amino-acid sequence, 138 residues long: Cysteine desulfuration protein SufE (138 aa).

Cysteine 51 serves as the catalytic Cysteine persulfide intermediate.

The protein belongs to the SufE family. In terms of assembly, homodimer. Interacts with SufS.

The protein resides in the cytoplasm. It participates in cofactor biosynthesis; iron-sulfur cluster biosynthesis. Its function is as follows. Participates in cysteine desulfuration mediated by SufS. Cysteine desulfuration mobilizes sulfur from L-cysteine to yield L-alanine and constitutes an essential step in sulfur metabolism for biosynthesis of a variety of sulfur-containing biomolecules. Functions as a sulfur acceptor for SufS, by mediating the direct transfer of the sulfur atom from the S-sulfanylcysteine of SufS, an intermediate product of cysteine desulfuration process. The polypeptide is Cysteine desulfuration protein SufE (Shigella boydii serotype 18 (strain CDC 3083-94 / BS512)).